The primary structure comprises 215 residues: 3-demethoxyubiquinol 3-hydroxylase (215 aa).

Fe cation-binding residues include Glu64, Glu94, His97, Glu146, Glu178, and His181.

This sequence belongs to the COQ7 family. Fe cation is required as a cofactor.

The protein localises to the cell membrane. It carries out the reaction a 5-methoxy-2-methyl-3-(all-trans-polyprenyl)benzene-1,4-diol + AH2 + O2 = a 3-demethylubiquinol + A + H2O. Its pathway is cofactor biosynthesis; ubiquinone biosynthesis. Its function is as follows. Catalyzes the hydroxylation of 2-nonaprenyl-3-methyl-6-methoxy-1,4-benzoquinol during ubiquinone biosynthesis. The protein is 3-demethoxyubiquinol 3-hydroxylase of Coxiella burnetii (strain Dugway 5J108-111).